A 549-amino-acid polypeptide reads, in one-letter code: Glucose-6-phosphate isomerase (549 aa).

The active-site Proton donor is the E355. Active-site residues include H386 and K514.

Belongs to the GPI family.

The protein resides in the cytoplasm. It carries out the reaction alpha-D-glucose 6-phosphate = beta-D-fructose 6-phosphate. The protein operates within carbohydrate biosynthesis; gluconeogenesis. Its pathway is carbohydrate degradation; glycolysis; D-glyceraldehyde 3-phosphate and glycerone phosphate from D-glucose: step 2/4. Catalyzes the reversible isomerization of glucose-6-phosphate to fructose-6-phosphate. This is Glucose-6-phosphate isomerase from Salmonella enteritidis PT4 (strain P125109).